A 205-amino-acid chain; its full sequence is Tumor suppressor candidate gene 1 protein homolog (205 aa).

A compositionally biased stretch (low complexity) spans 1-12; the sequence is MWRMRGGATRRG. Positions 1–49 are disordered; the sequence is MWRMRGGATRRGSCGGEGGGSRGESGRLGRAREGGGGGGGVGWRGRAGG. Residues 13 to 23 show a composition bias toward gly residues; sequence SCGGEGGGSRG. Over residues 24–33 the composition is skewed to basic and acidic residues; that stretch reads ESGRLGRARE. Over residues 34–48 the composition is skewed to gly residues; that stretch reads GGGGGGGVGWRGRAG. Residues 66–110 are a coiled coil; it reads LEALRARDERDRQNARLREENARLRLENRRLRRENRSLFRQALRL. Disordered stretches follow at residues 113 to 149 and 174 to 205; these read DSGE…SPRA and GARP…RPWL. Serine 146 is modified (phosphoserine). A compositionally biased stretch (basic and acidic residues) spans 196–205; that stretch reads HDPDVPRPWL.

The protein is Tumor suppressor candidate gene 1 protein homolog (Tusc1) of Mus musculus (Mouse).